The primary structure comprises 358 residues: Peptide chain release factor 1 (358 aa).

Glutamine 233 is modified (N5-methylglutamine). The disordered stretch occupies residues alanine 286–asparagine 309.

It belongs to the prokaryotic/mitochondrial release factor family. In terms of processing, methylated by PrmC. Methylation increases the termination efficiency of RF1.

Its subcellular location is the cytoplasm. In terms of biological role, peptide chain release factor 1 directs the termination of translation in response to the peptide chain termination codons UAG and UAA. This chain is Peptide chain release factor 1, found in Carboxydothermus hydrogenoformans (strain ATCC BAA-161 / DSM 6008 / Z-2901).